We begin with the raw amino-acid sequence, 316 residues long: MSTVQVPKLNTKDLLTLEELTQEEIISLIEFAIYLKKNKQEPLLQGKILGLIFDKHSTRTRVSFEAGMVQLGGHGMFLNGKEMQMGRGETVSDTAKVLSHYIDGIMIRTFSHADVEELAKESSIPVINGLTDDHHPCQALADLMTIYEETNTFKGIKLAYVGDGNNVCHSLLLASAKVGMHMTVATPVGYKPNEEIVKKALAIAKETGAEIEILHNPELAVNEADFIYTDVWMSMGQEGEEEKYTLFQPYQINKELVKHAKQTYHFLHCLPAHREEEVTGEIIDGPQSIVFEQAGNRLHAQKALLVSLFKNVEELS.

Carbamoyl phosphate contacts are provided by residues 57–60, Gln84, Arg108, and 135–138; these read STRT and HPCQ. L-ornithine is bound by residues Asn166, Asp230, and 234 to 235; that span reads SM. Carbamoyl phosphate is bound by residues 269 to 270 and Arg297; that span reads CL.

The protein belongs to the aspartate/ornithine carbamoyltransferase superfamily. OTCase family.

It localises to the cytoplasm. The catalysed reaction is carbamoyl phosphate + L-ornithine = L-citrulline + phosphate + H(+). The protein operates within amino-acid degradation; L-arginine degradation via ADI pathway; carbamoyl phosphate from L-arginine: step 2/2. Reversibly catalyzes the transfer of the carbamoyl group from carbamoyl phosphate (CP) to the N(epsilon) atom of ornithine (ORN) to produce L-citrulline. This chain is Ornithine carbamoyltransferase, found in Bacillus anthracis (strain CDC 684 / NRRL 3495).